Reading from the N-terminus, the 151-residue chain is Transcriptional repressor NrdR (151 aa).

A zinc finger lies at cysteine 3 to cysteine 34. Residues isoleucine 49–aspartate 139 form the ATP-cone domain.

The protein belongs to the NrdR family. Zn(2+) is required as a cofactor.

In terms of biological role, negatively regulates transcription of bacterial ribonucleotide reductase nrd genes and operons by binding to NrdR-boxes. The protein is Transcriptional repressor NrdR of Sulfurihydrogenibium sp. (strain YO3AOP1).